Here is a 109-residue protein sequence, read N- to C-terminus: Transcription initiation factor IIA subunit 2 (109 aa).

It belongs to the TFIIA subunit 2 family. As to quaternary structure, TFIIA is a heterodimer composed of the large toa1 and the small toa2 subunits.

It is found in the nucleus. The protein localises to the cytoplasm. TFIIA is a component of the transcription machinery of RNA polymerase II and plays an important role in transcriptional activation. TFIIA in a complex with tbp mediates transcriptional activity. The protein is Transcription initiation factor IIA subunit 2 (toa2) of Schizosaccharomyces pombe (strain 972 / ATCC 24843) (Fission yeast).